The following is a 409-amino-acid chain: Lissencephaly-1 homolog (409 aa).

The LisH domain maps to 7–39; it reads QEEELRFAVADYLQSCGYTNALEAFKKDASIPK. Residues 56–81 are a coiled coil; sequence SVVRLQKKVMDLELRLNNTTREMNSG. Polar residues predominate over residues 75 to 92; sequence TREMNSGVPTRNSRSSND. Residues 75 to 105 form a disordered region; that stretch reads TREMNSGVPTRNSRSSNDWIPRPPEKHSLSG. WD repeat units lie at residues 105–146, 147–186, 189–228, 231–270, 273–332, 335–374, and 377–409; these read GHRS…RTLR, GHTD…CRMT, GHDH…CVYN, GHRE…CKEE, GHEH…CLFS, GHDN…CSKS, and AHNH…WECR.

It belongs to the WD repeat LIS1/nudF family.

It localises to the cytoplasm. It is found in the cytoskeleton. The protein resides in the microtubule organizing center. The protein localises to the centrosome. In terms of biological role, positively regulates the activity of the minus-end directed microtubule motor protein dynein. May enhance dynein-mediated microtubule sliding by targeting dynein to the microtubule plus end. Required for several dynein- and microtubule-dependent processes. The sequence is that of Lissencephaly-1 homolog from Trichoplax adhaerens (Trichoplax reptans).